A 561-amino-acid polypeptide reads, in one-letter code: Putative transport protein YbjL (561 aa).

Helical transmembrane passes span 8–28 (LLNG…LCLG), 32–52 (LGSI…LLGQ), 66–86 (FMLF…SIFF), 94–114 (MLAL…GKLF), and 158–178 (NLSL…IVGA). 2 RCK C-terminal domains span residues 200 to 288 (RGLD…SFRN) and 292 to 373 (VFDR…RIGF). A run of 6 helical transmembrane segments spans residues 383–403 (LLAF…TFQF), 406–426 (FSFG…LGFM), 451–471 (VFMA…LGAI), 475–495 (MLIA…LFGA), 503–523 (ALLF…EIIS), and 540–560 (AIAN…CPGL).

The protein belongs to the AAE transporter (TC 2.A.81) family. YbjL subfamily.

The protein resides in the cell membrane. In Shigella dysenteriae serotype 1 (strain Sd197), this protein is Putative transport protein YbjL.